The sequence spans 255 residues: 5'-nucleotidase SurE (255 aa).

A divalent metal cation is bound by residues aspartate 8, aspartate 9, serine 39, and asparagine 91.

Belongs to the SurE nucleotidase family. A divalent metal cation is required as a cofactor.

The protein localises to the cytoplasm. It catalyses the reaction a ribonucleoside 5'-phosphate + H2O = a ribonucleoside + phosphate. Functionally, nucleotidase that shows phosphatase activity on nucleoside 5'-monophosphates. The chain is 5'-nucleotidase SurE from Acinetobacter baumannii (strain ATCC 17978 / DSM 105126 / CIP 53.77 / LMG 1025 / NCDC KC755 / 5377).